A 1066-amino-acid chain; its full sequence is Elongation factor 3 (1066 aa).

6 HEAT repeats span residues 112 to 149 (FIFENVLNSLVEAMGDKEKAVQKASLETLKAFVRVMSP), 151 to 188 (AAQQVLKVVLHQARTAGKWQVKTGCVALLEEMVTACPE), 192 to 229 (ALMPEIIPVMTEVIWDTKTDVQKASRAALTKLCALISN), 231 to 268 (DIERFIPALINSLIHPVEEVPKTIQLLSATTFVQEVDS), 269 to 306 (ATLALMVPLLSRGLNERPTATKRKVAVIIDNMTKLVDN), and 312 to 353 (PFLG…VTGD). Residue T418 participates in ADP binding. ABC transporter domains are found at residues 454–672 (EEGE…YAEL) and 699–1015 (IKMK…KKEE). Residues N735, E944, N947, and H973 each contribute to the ADP site. Residues 997-1066 (GHDWTESNSK…YDSADELEDL (70 aa)) are disordered. The segment covering 1042 to 1054 (RKAKKDRMARKKA) has biased composition (basic residues).

Belongs to the ABC transporter superfamily. ABCF family. EF3 subfamily.

It is found in the cytoplasm. The protein localises to the cytosol. The catalysed reaction is ATP + H2O = ADP + phosphate + H(+). It participates in protein biosynthesis; polypeptide chain elongation. Functionally, ribosome-dependent ATPase that functions in cytoplasmic translation elongation. Required for the ATP-dependent release of deacylated tRNA from the ribosomal E-site during protein biosynthesis. Stimulates the eEF1A-dependent binding of aminoacyl-tRNA to the ribosomal A-site, which has reduced affinity for tRNA as long as the E-site is occupied. Assists translation termination by stimulating the release of nascent protein from the ribosome by release factors. The chain is Elongation factor 3 from Mycosarcoma maydis (Corn smut fungus).